The chain runs to 20 residues: Protein YfiS (20 aa).

The polypeptide is Protein YfiS (Escherichia coli (strain K12)).